The chain runs to 214 residues: Neuromodulin (214 aa).

The tract at residues methionine 1–alanine 214 is disordered. S-palmitoyl cysteine attachment occurs at residues cysteine 3 and cysteine 4. Basic and acidic residues-rich tracts occupy residues lysine 9–histidine 33, methionine 52–glutamate 88, and leucine 95–proline 122. Positions alanine 32–serine 61 constitute an IQ domain. Over residues glutamate 124–glutamate 133 the composition is skewed to low complexity. Basic and acidic residues-rich tracts occupy residues glutamine 150–valine 160, alanine 168–alanine 193, and glutamate 205–alanine 214.

It belongs to the neuromodulin family. As to quaternary structure, binds calmodulin with a greater affinity in the absence of Ca(2+) than in its presence. Palmitoylated. Palmitoylation is essential for plasma membrane association.

Its subcellular location is the cell membrane. It is found in the cell projection. It localises to the growth cone membrane. The protein localises to the synapse. The protein resides in the filopodium membrane. This protein is associated with nerve growth. It is a major component of the motile 'growth cones' that form the tips of elongating axons. Plays a role in axonal and dendritic filopodia induction. The protein is Neuromodulin (gap43) of Xenopus laevis (African clawed frog).